A 105-amino-acid polypeptide reads, in one-letter code: Prokineticin-1 (105 aa).

Positions 1-19 (MRGAVQVFIMLLLATVSDC) are cleaved as a signal peptide. Cystine bridges form between cysteine 26/cysteine 38, cysteine 32/cysteine 50, cysteine 37/cysteine 78, cysteine 60/cysteine 86, and cysteine 80/cysteine 96.

It belongs to the AVIT (prokineticin) family.

The protein resides in the secreted. In terms of biological role, potently contracts gastrointestinal (GI) smooth muscle. Induces proliferation, migration and fenestration (the formation of membrane discontinuities) in capillary endothelial cells derived from endocrine glands. Has little or no effect on a variety of other endothelial and non-endothelial cell types. Induces proliferation and differentiation, but not migration, of enteric neural crest cells. Directly influences neuroblastoma progression by promoting the proliferation and migration of neuroblastoma cells. Positively regulates PTGS2 expression and prostaglandin synthesis. May play a role in placentation. May play a role in normal and pathological testis angiogenesis. The sequence is that of Prokineticin-1 (Prok1) from Rattus norvegicus (Rat).